The primary structure comprises 298 residues: Mitochondrial substrate carrier family protein N (298 aa).

The Mitochondrial intermembrane portion of the chain corresponds to 1 to 13 (MAGDLTPSLFLKY). Solcar repeat units follow at residues 8–92 (SLFL…FKKT), 104–188 (FRIP…TAEN), and 207–290 (QKLS…IKQM). The helical transmembrane segment at 14–34 (GFGGALSCSITHSLVVPLDVV) threads the bilayer. Residues 35 to 60 (KTLLQTNPGKYTGMMNGFSTVIKEQG) are Mitochondrial matrix-facing. Residues 61–81 (PSGLLQGLGPTAVGYALQGFL) traverse the membrane as a helical segment. Over 82 to 105 (KFGFYEVFKKTYADAVGEKADQFR) the chain is Mitochondrial intermembrane. Residues 106–126 (IPIWLAASATAEVIADIALCP) traverse the membrane as a helical segment. At 127–162 (NEAVRIRLVAEPTFAKSPVEAFGKIFKQEGVLGFYK) the chain is on the mitochondrial matrix side. Residues 163-179 (GLPPILLKQVPYTMAKF) traverse the membrane as a helical segment. The Mitochondrial intermembrane segment spans residues 180–208 (AVFEFTAENVYKGLAASGKPKESLTDGQK). The helical transmembrane segment at 209–229 (LSVSLGSGIVAGIVAAIVSQP) threads the bilayer. Residues 230 to 262 (ADTILSKINQEKTDGGVVKAIGNIMRRLGVRGL) lie on the Mitochondrial matrix side of the membrane. A helical transmembrane segment spans residues 263 to 283 (FLGLPTRCFMVGTLTAGQFFI). The Mitochondrial intermembrane segment spans residues 284 to 298 (YDGIKQMLGLTPAKK).

It belongs to the mitochondrial carrier (TC 2.A.29) family.

It localises to the mitochondrion inner membrane. Functionally, mitochondrial solute carriers shuttle metabolites, nucleotides, and cofactors through the mitochondrial inner membrane. Transports phosphate groups from the cytosol to the mitochondrial matrix. Phosphate is cotransported with H(+). This is Mitochondrial substrate carrier family protein N (mcfN) from Dictyostelium discoideum (Social amoeba).